Here is a 122-residue protein sequence, read N- to C-terminus: UPF0102 protein CLH_1204 (122 aa).

Belongs to the UPF0102 family.

The polypeptide is UPF0102 protein CLH_1204 (Clostridium botulinum (strain Alaska E43 / Type E3)).